The following is a 160-amino-acid chain: Cyclic pyranopterin monophosphate synthase (160 aa).

Substrate contacts are provided by residues 75–77 (MCH) and 115–116 (ME). The active site involves Asp130.

This sequence belongs to the MoaC family. As to quaternary structure, homohexamer; trimer of dimers.

The catalysed reaction is (8S)-3',8-cyclo-7,8-dihydroguanosine 5'-triphosphate = cyclic pyranopterin phosphate + diphosphate. It participates in cofactor biosynthesis; molybdopterin biosynthesis. Catalyzes the conversion of (8S)-3',8-cyclo-7,8-dihydroguanosine 5'-triphosphate to cyclic pyranopterin monophosphate (cPMP). The chain is Cyclic pyranopterin monophosphate synthase from Lysinibacillus sphaericus (strain C3-41).